The chain runs to 72 residues: Large ribosomal subunit protein bL31 (72 aa).

The protein belongs to the bacterial ribosomal protein bL31 family. Type A subfamily. Part of the 50S ribosomal subunit.

Its function is as follows. Binds the 23S rRNA. The sequence is that of Large ribosomal subunit protein bL31 from Maricaulis maris (strain MCS10) (Caulobacter maris).